The following is a 70-amino-acid chain: Homeobox protein OTX2 (70 aa).

The disordered stretch occupies residues 34-70 (HQLPGPGATLSPMGTNAVTSHLNQSPASLSTQGYGAS). Residues 45 to 70 (PMGTNAVTSHLNQSPASLSTQGYGAS) are compositionally biased toward polar residues.

The protein belongs to the paired homeobox family. Bicoid subfamily.

It is found in the nucleus. In terms of biological role, transcription factor probably involved in the development of the brain and the sense organs. Can bind to the bicoid/BCD target sequence (BTS): 5'-TCTAATCCC-3'. The polypeptide is Homeobox protein OTX2 (Otx2) (Rattus norvegicus (Rat)).